Consider the following 320-residue polypeptide: HPr kinase/phosphorylase (320 aa).

Active-site residues include His-141 and Lys-162. 156–163 (GHSGLGKS) is a binding site for ATP. A Mg(2+)-binding site is contributed by Ser-163. The active-site Proton acceptor; for phosphorylation activity. Proton donor; for dephosphorylation activity is the Asp-180. An important for the catalytic mechanism of both phosphorylation and dephosphorylation region spans residues 204–213 (LEVRGLGILN). Glu-205 provides a ligand contact to Mg(2+). Arg-248 is an active-site residue. An important for the catalytic mechanism of dephosphorylation region spans residues 269–274 (PVAVGR).

The protein belongs to the HPrK/P family. Homohexamer. Requires Mg(2+) as cofactor.

The catalysed reaction is [HPr protein]-L-serine + ATP = [HPr protein]-O-phospho-L-serine + ADP + H(+). It catalyses the reaction [HPr protein]-O-phospho-L-serine + phosphate + H(+) = [HPr protein]-L-serine + diphosphate. Functionally, catalyzes the ATP- as well as the pyrophosphate-dependent phosphorylation of a specific serine residue in HPr, a phosphocarrier protein of the phosphoenolpyruvate-dependent sugar phosphotransferase system (PTS). HprK/P also catalyzes the pyrophosphate-producing, inorganic phosphate-dependent dephosphorylation (phosphorolysis) of seryl-phosphorylated HPr (P-Ser-HPr). In Neisseria meningitidis serogroup C / serotype 2a (strain ATCC 700532 / DSM 15464 / FAM18), this protein is HPr kinase/phosphorylase.